A 118-amino-acid polypeptide reads, in one-letter code: MATDLMSVVEATQLRDDVPDFDSGDTVNVHLRVVEGEKERIQQFEGVCLSRRGSGPNETITVRKVSEGVGVERIFPVHSPRVAQIDVVRRGAVNRSKLSYLRGLSGKDARIQEQIRGN.

Belongs to the bacterial ribosomal protein bL19 family.

In terms of biological role, this protein is located at the 30S-50S ribosomal subunit interface and may play a role in the structure and function of the aminoacyl-tRNA binding site. The chain is Large ribosomal subunit protein bL19 from Salinibacter ruber (strain DSM 13855 / M31).